Consider the following 189-residue polypeptide: Elongation factor P (189 aa).

The protein belongs to the elongation factor P family.

The protein localises to the cytoplasm. The protein operates within protein biosynthesis; polypeptide chain elongation. Its function is as follows. Involved in peptide bond synthesis. Stimulates efficient translation and peptide-bond synthesis on native or reconstituted 70S ribosomes in vitro. Probably functions indirectly by altering the affinity of the ribosome for aminoacyl-tRNA, thus increasing their reactivity as acceptors for peptidyl transferase. In Pseudomonas entomophila (strain L48), this protein is Elongation factor P.